The primary structure comprises 410 residues: Argininosuccinate synthase (410 aa).

ATP contacts are provided by residues 10–18 (AYSGGLDTS) and Ala37. Residues Tyr90 and Ser95 each coordinate L-citrulline. Residue Gly120 coordinates ATP. L-aspartate is bound by residues Thr122, Asn126, and Asp127. Asn126 contributes to the L-citrulline binding site. L-citrulline-binding residues include Arg130, Ser182, Ser191, Glu267, and Tyr279.

This sequence belongs to the argininosuccinate synthase family. Type 1 subfamily. In terms of assembly, homotetramer.

The protein resides in the cytoplasm. It carries out the reaction L-citrulline + L-aspartate + ATP = 2-(N(omega)-L-arginino)succinate + AMP + diphosphate + H(+). The protein operates within amino-acid biosynthesis; L-arginine biosynthesis; L-arginine from L-ornithine and carbamoyl phosphate: step 2/3. The chain is Argininosuccinate synthase from Polynucleobacter necessarius subsp. necessarius (strain STIR1).